Reading from the N-terminus, the 310-residue chain is Methionyl-tRNA formyltransferase (310 aa).

106 to 109 provides a ligand contact to (6S)-5,6,7,8-tetrahydrofolate; sequence SLLP.

It belongs to the Fmt family.

The catalysed reaction is L-methionyl-tRNA(fMet) + (6R)-10-formyltetrahydrofolate = N-formyl-L-methionyl-tRNA(fMet) + (6S)-5,6,7,8-tetrahydrofolate + H(+). Attaches a formyl group to the free amino group of methionyl-tRNA(fMet). The formyl group appears to play a dual role in the initiator identity of N-formylmethionyl-tRNA by promoting its recognition by IF2 and preventing the misappropriation of this tRNA by the elongation apparatus. The chain is Methionyl-tRNA formyltransferase from Fervidobacterium nodosum (strain ATCC 35602 / DSM 5306 / Rt17-B1).